A 508-amino-acid chain; its full sequence is Cytochrome P450 monooxygenase lepD (508 aa).

The chain crosses the membrane as a helical span at residues 22–42; that stretch reads IAAAVAVVASIVIYLALSSFF. N-linked (GlcNAc...) asparagine glycosylation is found at Asn53 and Asn416. Position 454 (Cys454) interacts with heme.

Belongs to the cytochrome P450 family. Requires heme as cofactor.

The protein resides in the membrane. Cytochrome P450 monooxygenase; part of the gene cluster 23 that mediates the biosynthesis of a family of 2-pyridones known as leporins. The hybrid PKS-NRPS synthetase lepA and the enoyl reductase lepG are responsible for fusion of phenylalanine with a hexaketide and subsequent release of the stable tetramic acid precursor, pre-leporin C. Because lepA lacks a designated enoylreductase (ER) domain, the required activity is provided the enoyl reductase lepG. It is possible that the dehydrogenase lepF also participates in production of pre-leporin C. Cytochrome P450 monooxygenase lepH is then required for the ring expansion step to yield leporin C. Leporin C is then presumably further oxidized by the N-hydroxylase lepD to form leporin B. LepI may possess a function in biosynthesis upstream of lepA. Leporin B is further oxidized in the presence of ferric ion to give the leporin B trimer-iron chelate, but whether or not this reaction is catalyzed by an enzyme in the pathway or by ferric ion is not determined yet. The chain is Cytochrome P450 monooxygenase lepD from Aspergillus flavus (strain ATCC 200026 / FGSC A1120 / IAM 13836 / NRRL 3357 / JCM 12722 / SRRC 167).